The following is a 251-amino-acid chain: UPF0309 protein SGR_3073 (251 aa).

An SIS domain is found at 36–221 (VADTVASGGR…EQLVARGIEP (186 aa)).

It belongs to the UPF0309 family.

The polypeptide is UPF0309 protein SGR_3073 (Streptomyces griseus subsp. griseus (strain JCM 4626 / CBS 651.72 / NBRC 13350 / KCC S-0626 / ISP 5235)).